Here is a 340-residue protein sequence, read N- to C-terminus: DNA polymerase III subunit delta' (340 aa).

In terms of assembly, the DNA polymerase holoenzyme is a complex that contains 10 different types of subunits. These subunits are organized into 3 functionally essential subassemblies: the pol III core, the beta sliding clamp processivity factor and the clamp-loading complex. The pol III core (subunits alpha,epsilon and theta) contains the polymerase and the 3'-5' exonuclease proofreading activities. The polymerase is tethered to the template via the sliding clamp processivity factor. The clamp-loading complex assembles the beta processivity factor onto the primer template and plays a central role in the organization and communication at the replication fork. This complex contains delta, delta', psi and chi, and copies of either or both of two different DnaX proteins, gamma and tau. The composition of the holoenzyme is, therefore: (alpha,epsilon,theta)[2]-(gamma/tau)[3]-delta,delta', psi,chi-beta[4].

The catalysed reaction is DNA(n) + a 2'-deoxyribonucleoside 5'-triphosphate = DNA(n+1) + diphosphate. DNA polymerase III is a complex, multichain enzyme responsible for most of the replicative synthesis in bacteria. This DNA polymerase also exhibits 3' to 5' exonuclease activity. The sequence is that of DNA polymerase III subunit delta' (holB) from Yersinia pestis.